The primary structure comprises 748 residues: NAD(P)H-quinone oxidoreductase subunit 5, chloroplastic (748 aa).

16 consecutive transmembrane segments (helical) span residues 9-29 (WIIP…LLLF), 40-60 (WSFP…YLSI), 89-109 (IDPL…MVLI), 125-145 (FAYM…SNLI), 147-167 (IYIF…FWFT), 185-205 (GDFG…SFEF), 219-239 (NEVN…GAVA), 258-278 (TPIS…FLVA), 280-300 (LLPL…IGII), 327-347 (LGYM…FHLI), 354-374 (ALLF…VGYS), 396-416 (NAFL…CFWS), 425-445 (WLYS…TAFY), 550-570 (LFPM…GSPF), 611-631 (ATFS…FYKP), and 728-748 (YILL…FVFF).

It belongs to the complex I subunit 5 family. As to quaternary structure, NDH is composed of at least 16 different subunits, 5 of which are encoded in the nucleus.

It is found in the plastid. Its subcellular location is the chloroplast thylakoid membrane. It carries out the reaction a plastoquinone + NADH + (n+1) H(+)(in) = a plastoquinol + NAD(+) + n H(+)(out). The enzyme catalyses a plastoquinone + NADPH + (n+1) H(+)(in) = a plastoquinol + NADP(+) + n H(+)(out). NDH shuttles electrons from NAD(P)H:plastoquinone, via FMN and iron-sulfur (Fe-S) centers, to quinones in the photosynthetic chain and possibly in a chloroplast respiratory chain. The immediate electron acceptor for the enzyme in this species is believed to be plastoquinone. Couples the redox reaction to proton translocation, and thus conserves the redox energy in a proton gradient. The sequence is that of NAD(P)H-quinone oxidoreductase subunit 5, chloroplastic (ndhF) from Cucumis sativus (Cucumber).